Here is a 430-residue protein sequence, read N- to C-terminus: Adenylosuccinate synthetase (430 aa).

GTP contacts are provided by residues 12–18 and 40–42; these read GDEGKGK and GHT. Asp-13 acts as the Proton acceptor in catalysis. Asp-13 and Gly-40 together coordinate Mg(2+). Residues 13-16, 38-41, Thr-130, Arg-144, Gln-224, Thr-239, and Arg-303 each bind IMP; these read DEGK and NAGH. The Proton donor role is filled by His-41. 299-305 serves as a coordination point for substrate; sequence VNTGRKR. GTP is bound by residues Arg-305, 331 to 333, and 413 to 415; these read KLD and STS.

Belongs to the adenylosuccinate synthetase family. In terms of assembly, homodimer. Mg(2+) serves as cofactor.

The protein resides in the cytoplasm. It carries out the reaction IMP + L-aspartate + GTP = N(6)-(1,2-dicarboxyethyl)-AMP + GDP + phosphate + 2 H(+). Its pathway is purine metabolism; AMP biosynthesis via de novo pathway; AMP from IMP: step 1/2. Functionally, plays an important role in the de novo pathway of purine nucleotide biosynthesis. Catalyzes the first committed step in the biosynthesis of AMP from IMP. The chain is Adenylosuccinate synthetase from Nitrobacter winogradskyi (strain ATCC 25391 / DSM 10237 / CIP 104748 / NCIMB 11846 / Nb-255).